Here is a 545-residue protein sequence, read N- to C-terminus: MTTNYIFVTGGVVSSLGKGIAAASLAAILEARGLNVTIMKLDPYINVDPGTMSPTQHGEVFVTEDGAETDLDLGHYERFIRTKMSRRNNFTTGRIYSDVLRKERRGDYLGATIQVIPHITNAIKERIIEGGEGHDVVLVEIGGTVGDIESLPFLEAIRQMAVQVGREHTLFMHLTLVPYLAAAGEVKTKPTQHSVKELLSIGIQPDVLICRSDRTVPANERAKIALFCNVPEKAVISLKDIDSIYKIPALLKSQGLDDYICKRFSLNCPEANLSEWEQVVYEEANPGGEVTIGMVGKYVALPDAYKSVIEALKHGGLKNRLTVNIKLIDSQDVETRGVEVLKDLDAILIPGGFGYRGVEGKIMSANYARENNIPYLGICLGMQVALMEFARNVAGMEGANSTEFVPDCKYPVVALITEWRDENGDVEVRDEASDLGGTMRVGGQQCHLTEGSLVRQMYGEQTIIERHRHRYEVNNMLLKQIEAAGLRVAGLSADRKLVEIVELPDHPWFVACQFHPEFTSTPRDGHPLFAGFVKAAGAYQKRQVK.

An amidoligase domain region spans residues 1-266; that stretch reads MTTNYIFVTG…DDYICKRFSL (266 aa). Ser14 is a CTP binding site. Ser14 is a binding site for UTP. ATP-binding positions include 15-20 and Asp72; that span reads SLGKGI. 2 residues coordinate Mg(2+): Asp72 and Glu140. Residues 147–149, 187–192, and Lys223 each bind CTP; these read DIE and KTKPTQ. UTP is bound by residues 187-192 and Lys223; that span reads KTKPTQ. 239–241 contributes to the ATP binding site; sequence KDI. Residues 291-542 enclose the Glutamine amidotransferase type-1 domain; that stretch reads TIGMVGKYVA…VKAAGAYQKR (252 aa). An L-glutamine-binding site is contributed by Gly352. Residue Cys379 is the Nucleophile; for glutamine hydrolysis of the active site. L-glutamine contacts are provided by residues 380–383, Glu403, and Arg470; that span reads LGMQ. Active-site residues include His515 and Glu517.

It belongs to the CTP synthase family. Homotetramer.

It catalyses the reaction UTP + L-glutamine + ATP + H2O = CTP + L-glutamate + ADP + phosphate + 2 H(+). The catalysed reaction is L-glutamine + H2O = L-glutamate + NH4(+). It carries out the reaction UTP + NH4(+) + ATP = CTP + ADP + phosphate + 2 H(+). The protein operates within pyrimidine metabolism; CTP biosynthesis via de novo pathway; CTP from UDP: step 2/2. With respect to regulation, allosterically activated by GTP, when glutamine is the substrate; GTP has no effect on the reaction when ammonia is the substrate. The allosteric effector GTP functions by stabilizing the protein conformation that binds the tetrahedral intermediate(s) formed during glutamine hydrolysis. Inhibited by the product CTP, via allosteric rather than competitive inhibition. Its function is as follows. Catalyzes the ATP-dependent amination of UTP to CTP with either L-glutamine or ammonia as the source of nitrogen. Regulates intracellular CTP levels through interactions with the four ribonucleotide triphosphates. In Pectobacterium atrosepticum (strain SCRI 1043 / ATCC BAA-672) (Erwinia carotovora subsp. atroseptica), this protein is CTP synthase.